The following is a 537-amino-acid chain: CWF19-like protein 1 (537 aa).

The interval 297–323 (KQGRKRPSTGRDTRPPHAKQPRKPPQP) is disordered.

It belongs to the CWF19 family.

The sequence is that of CWF19-like protein 1 (Cwf19l1) from Mus musculus (Mouse).